The chain runs to 647 residues: Exoribonuclease 2 (647 aa).

The 330-residue stretch at 190–519 (REDLTSLPFV…NHRLLKAIIK (330 aa)) folds into the RNB domain. The S1 motif domain maps to 564-646 (EQRFSAEVID…ETRSIVARPV (83 aa)).

Belongs to the RNR ribonuclease family. RNase II subfamily.

The protein localises to the cytoplasm. The enzyme catalyses Exonucleolytic cleavage in the 3'- to 5'-direction to yield nucleoside 5'-phosphates.. Functionally, involved in mRNA degradation. Hydrolyzes single-stranded polyribonucleotides processively in the 3' to 5' direction. This Erwinia tasmaniensis (strain DSM 17950 / CFBP 7177 / CIP 109463 / NCPPB 4357 / Et1/99) protein is Exoribonuclease 2.